A 1239-amino-acid chain; its full sequence is Inner tegument protein (1239 aa).

Low complexity predominate over residues 1–10; the sequence is MASAMESDSS. 3 disordered regions span residues 1–20, 672–708, and 1090–1239; these read MASA…DAQP, GESP…GGPW, and GRNA…AEDE. An interaction with large tegument protein region spans residues 618-1239; it reads NELPKTRSLA…RPPRPTAEDE (622 aa). Residues 1115–1126 are compositionally biased toward low complexity; the sequence is DSSPFSFSSSDF. Residues 1127–1136 show a composition bias toward acidic residues; sequence SDQDEGEGGE. Residues 1181–1190 show a composition bias toward low complexity; the sequence is RTTPSPSRRA. The segment covering 1219-1232 has biased composition (basic residues); sequence VRPRTRRGATRRPP.

It belongs to the herpesviridae inner tegument protein family. Interacts (via C-terminus) with the large tegument protein/LTP (via N-terminus).

Its subcellular location is the virion tegument. The protein localises to the host cytoplasm. The protein resides in the host nucleus. It is found in the host Golgi apparatus. It localises to the host trans-Golgi network. Plays an essential role in cytoplasmic secondary envelopment during viral egress. Interacts with the capsid via the large tegument protein/LTP and participates in its transport to the host trans-Golgi network (TGN) where secondary envelopment occurs. Modulates tegumentation and capsid accumulation at the viral assembly complex. The polypeptide is Inner tegument protein (Homo sapiens (Human)).